Consider the following 313-residue polypeptide: Maintenance of mitochondrial morphology protein 1 (313 aa).

The Lumenal segment spans residues 1–12 (MIHLPQGSFTQG). A helical transmembrane segment spans residues 13-33 (LIVGQLLTLAIIYVFLRFFLF). Residues 34-313 (CSPIPKSVAN…APQEESSNED (280 aa)) lie on the Cytoplasmic side of the membrane. Positions 42–63 (ANSPKQTGNETPDETPSTPLSN) are enriched in polar residues. A disordered region spans residues 42–65 (ANSPKQTGNETPDETPSTPLSNNK). Residues 90–288 (EPESLDWFNV…SPQFQQIAIP (199 aa)) enclose the SMP-LTD domain.

The protein belongs to the MMM1 family. As to quaternary structure, homodimer. Component of the ER-mitochondria encounter structure (ERMES) or MDM complex, composed of mmm1, mdm10, mdm12 and mdm34. A mmm1 homodimer associates with one molecule of mdm12 on each side in a pairwise head-to-tail manner, and the SMP-LTD domains of mmm1 and mdm12 generate a continuous hydrophobic tunnel for phospholipid trafficking.

It is found in the endoplasmic reticulum membrane. In terms of biological role, component of the ERMES/MDM complex, which serves as a molecular tether to connect the endoplasmic reticulum (ER) and mitochondria. Components of this complex are involved in the control of mitochondrial shape and protein biogenesis, and function in nonvesicular lipid trafficking between the ER and mitochondria. The mdm12-mmm1 subcomplex functions in the major beta-barrel assembly pathway that is responsible for biogenesis of all outer membrane beta-barrel proteins, and acts in a late step after the SAM complex. The mdm10-mdm12-mmm1 subcomplex further acts in the TOM40-specific pathway after the action of the mdm12-mmm1 complex. Essential for establishing and maintaining the structure of mitochondria and maintenance of mtDNA nucleoids. This is Maintenance of mitochondrial morphology protein 1 from Schizosaccharomyces pombe (strain 972 / ATCC 24843) (Fission yeast).